Consider the following 503-residue polypeptide: Aspartyl/glutamyl-tRNA(Asn/Gln) amidotransferase subunit B (503 aa).

It belongs to the GatB/GatE family. GatB subfamily. As to quaternary structure, heterotrimer of A, B and C subunits.

It catalyses the reaction L-glutamyl-tRNA(Gln) + L-glutamine + ATP + H2O = L-glutaminyl-tRNA(Gln) + L-glutamate + ADP + phosphate + H(+). The catalysed reaction is L-aspartyl-tRNA(Asn) + L-glutamine + ATP + H2O = L-asparaginyl-tRNA(Asn) + L-glutamate + ADP + phosphate + 2 H(+). Allows the formation of correctly charged Asn-tRNA(Asn) or Gln-tRNA(Gln) through the transamidation of misacylated Asp-tRNA(Asn) or Glu-tRNA(Gln) in organisms which lack either or both of asparaginyl-tRNA or glutaminyl-tRNA synthetases. The reaction takes place in the presence of glutamine and ATP through an activated phospho-Asp-tRNA(Asn) or phospho-Glu-tRNA(Gln). The polypeptide is Aspartyl/glutamyl-tRNA(Asn/Gln) amidotransferase subunit B (Jannaschia sp. (strain CCS1)).